Reading from the N-terminus, the 162-residue chain is Transmembrane protein 92 (162 aa).

The N-terminal stretch at 1–22 (MLDTWVWGTLTLTFGLLSSLQG) is a signal peptide. The Extracellular portion of the chain corresponds to 23 to 63 (VSFNETANTCDILNCPKGFTCCVKECCPERKVWDPANDRFR). Residues 64–84 (FLVILACIIFPILFICALVSL) form a helical membrane-spanning segment. The Cytoplasmic segment spans residues 85 to 162 (FCPNCTELQH…QMRGRAYATL (78 aa)). The segment at 134-162 (TPPTEPPPPYSLRPEGPAGQMRGRAYATL) is disordered.

The protein localises to the membrane. This is Transmembrane protein 92 (Tmem92) from Mus musculus (Mouse).